A 673-amino-acid chain; its full sequence is Probable multidrug resistance ABC transporter ATP-binding/permease protein YheH (673 aa).

A run of 5 helical transmembrane segments spans residues 18 to 38 (LITAVLLLTVAVGAELTGPFI), 146 to 166 (IKGMVLLICLYGGLLVFSVFF), 223 to 243 (LYVTVLSTFVTSGIYMFGIFT), 245 to 265 (LFLLDVKLAFVCLAIVPIIWL), and 347 to 367 (LAFVCLIWHFGGASLNAAGIV). One can recognise an ABC transmembrane type-1 domain in the interval 18–398 (LITAVLLLTV…IVNQFSKLEL (381 aa)). The 235-residue stretch at 430–664 (VEFRDVSFAY…EGQYYQMYEL (235 aa)) folds into the ABC transporter domain. 463–470 (GHTGSGKS) serves as a coordination point for ATP.

The protein belongs to the ABC transporter superfamily. As to quaternary structure, heterodimer composed of YheH and YheI.

The protein resides in the cell membrane. Its activity is regulated as follows. Inhibited by ortho-vanadate. Functionally, involved in the transport of four structurally unrelated drugs, including doxorubicin and mitoxantrone. Transmembrane domains (TMD) form a pore in the membrane and the ATP-binding domain (NBD) is responsible for energy generation. The polypeptide is Probable multidrug resistance ABC transporter ATP-binding/permease protein YheH (yheH) (Bacillus subtilis (strain 168)).